We begin with the raw amino-acid sequence, 437 residues long: O-methyltransferase 10 (437 aa).

Positions 259, 282, 315, and 316 each coordinate S-adenosyl-L-methionine. H335 acts as the Proton acceptor in catalysis.

The protein belongs to the class I-like SAM-binding methyltransferase superfamily. Cation-independent O-methyltransferase family. COMT subfamily.

It catalyses the reaction (3,5-dichloro-2,4,6-trihydroxyphenyl)hexan-1-one + S-adenosyl-L-methionine = 1-(3,5-dichloro-2,6-dihydroxy-4-methoxyphenyl)hexan-1-one + S-adenosyl-L-homocysteine + H(+). The polypeptide is O-methyltransferase 10 (omt10) (Dictyostelium discoideum (Social amoeba)).